The primary structure comprises 77 residues: UPF0346 protein lin1971 (77 aa).

The protein belongs to the UPF0346 family.

The chain is UPF0346 protein lin1971 from Listeria innocua serovar 6a (strain ATCC BAA-680 / CLIP 11262).